The sequence spans 470 residues: 6-phospho-beta-galactosidase (470 aa).

D-galactose 6-phosphate-binding residues include glutamine 19, histidine 116, asparagine 159, glutamate 160, and asparagine 297. The active-site Proton donor is the glutamate 160. Residue glutamate 375 is the Nucleophile of the active site. Positions 430, 431, 437, and 439 each coordinate D-galactose 6-phosphate.

Belongs to the glycosyl hydrolase 1 family.

The enzyme catalyses a 6-phospho-beta-D-galactoside + H2O = D-galactose 6-phosphate + an alcohol. It participates in carbohydrate metabolism; lactose degradation; D-galactose 6-phosphate and beta-D-glucose from lactose 6-phosphate: step 1/1. This is 6-phospho-beta-galactosidase from Staphylococcus epidermidis (strain ATCC 35984 / DSM 28319 / BCRC 17069 / CCUG 31568 / BM 3577 / RP62A).